A 152-amino-acid chain; its full sequence is Superoxide dismutase [Cu-Zn] (152 aa).

Residues H45, H47, and H62 each contribute to the Cu cation site. C56 and C145 form a disulfide bridge. Zn(2+)-binding residues include H62, H70, H79, and D82. H119 is a Cu cation binding site.

Belongs to the Cu-Zn superoxide dismutase family. As to quaternary structure, homodimer. Cu cation is required as a cofactor. It depends on Zn(2+) as a cofactor.

It localises to the cytoplasm. The catalysed reaction is 2 superoxide + 2 H(+) = H2O2 + O2. Its function is as follows. Destroys radicals which are normally produced within the cells and which are toxic to biological systems. The polypeptide is Superoxide dismutase [Cu-Zn] (SODCC) (Brassica oleracea var. capitata (Cabbage)).